The primary structure comprises 353 residues: MKMSFRWYGESDPVSLQYIRQIPGVTHIVSAIYDEPVGEVWPAHKIEALKATIERAGLQFDVVESVPVHEDIKLGKPGRDRLIDHYRQTIRHLGAAGIRVVCYNFMPVFDWTRTELSKTLDDGSTCLAFSTDAVDRIDPNDGIALPGWDSSYRPEQLQALLADYRDVDENALWANLEYFLKAIIPVAEEAGVKMAIHPDDPPRPIFGLPRIVKNRDDLARIVRLVDSPANGLTLCSGSLGAGPENDVEALVREFGAMGRIHFAHIRNVKVDANGDFEETAHLSSCGSLDIAAIVKAYHDTGFTGYVRPDHGRMIWGETGKPGYGLYDRALGAVYLNGLWEALAKFDRAPQASQ.

The protein belongs to the mannonate dehydratase family. The cofactor is Fe(2+). Mn(2+) serves as cofactor.

The enzyme catalyses D-mannonate = 2-dehydro-3-deoxy-D-gluconate + H2O. It participates in carbohydrate metabolism; pentose and glucuronate interconversion. Its function is as follows. Catalyzes the dehydration of D-mannonate. The protein is Mannonate dehydratase of Burkholderia cenocepacia (strain ATCC BAA-245 / DSM 16553 / LMG 16656 / NCTC 13227 / J2315 / CF5610) (Burkholderia cepacia (strain J2315)).